Here is a 1038-residue protein sequence, read N- to C-terminus: DNA polymerase delta catalytic subunit (1038 aa).

The interval 1–29 is disordered; it reads MSHSIPITSSPPPALKKLKLPNGSEEPSE. Positions 942, 945, 958, and 961 each coordinate Zn(2+). A CysA-type zinc finger spans residues 942 to 961; the sequence is CVSCRTPLKKDNLGALCPNC. Positions 992, 995, 1005, and 1010 each coordinate [4Fe-4S] cluster. Positions 992–1010 match the CysB motif motif; sequence CQRCQGSLHQEVLCSNKDC.

This sequence belongs to the DNA polymerase type-B family. Heterodimer with subunits of 125 kDa and 50 kDa. The 125 kDa subunit contains the polymerase active site and most likely the active site for the 3'-5' exonuclease activity. It depends on [4Fe-4S] cluster as a cofactor.

It is found in the nucleus. It catalyses the reaction DNA(n) + a 2'-deoxyribonucleoside 5'-triphosphate = DNA(n+1) + diphosphate. Functionally, this polymerase possesses two enzymatic activities: DNA synthesis (polymerase) and an exonucleolytic activity that degrades single-stranded DNA in the 3'- to 5'-direction. This chain is DNA polymerase delta catalytic subunit (POL3), found in Candida albicans (Yeast).